The sequence spans 341 residues: HTH-type transcriptional repressor PurR (341 aa).

The HTH lacI-type domain maps to 2–56; sequence ATIKDVAKRAGVSTTTVSHVINKTRFVADETKAAVWEAIKELHYSPSAVARSLKV. The H-T-H motif DNA-binding region spans 4 to 23; that stretch reads IKDVAKRAGVSTTTVSHVIN. Residues 48 to 56 mediate DNA binding; it reads SAVARSLKV. Positions 73, 190, 192, 221, and 275 each coordinate hypoxanthine.

As to quaternary structure, homodimer.

Its pathway is purine metabolism; purine nucleotide biosynthesis [regulation]. In terms of biological role, is the main repressor of the genes involved in the de novo synthesis of purine nucleotides, regulating purB, purC, purEK, purF, purHD, purL, purMN and guaBA expression. PurR is allosterically activated to bind its cognate DNA by binding the purine corepressors, hypoxanthine or guanine, thereby effecting transcription repression. In Edwardsiella ictaluri (strain 93-146), this protein is HTH-type transcriptional repressor PurR.